A 196-amino-acid chain; its full sequence is Peroxisome assembly protein 22 (196 aa).

A helical transmembrane segment spans residues 15-37 (LWIAALVAASIVTISYKVYSSYI).

The protein belongs to the peroxin-22 family.

It is found in the peroxisome membrane. Functionally, involved in peroxisome biogenesis. In Debaryomyces hansenii (strain ATCC 36239 / CBS 767 / BCRC 21394 / JCM 1990 / NBRC 0083 / IGC 2968) (Yeast), this protein is Peroxisome assembly protein 22 (PEX22).